The following is a 679-amino-acid chain: Glycine--tRNA ligase beta subunit (679 aa).

The protein belongs to the class-II aminoacyl-tRNA synthetase family. Tetramer of two alpha and two beta subunits.

The protein resides in the cytoplasm. The catalysed reaction is tRNA(Gly) + glycine + ATP = glycyl-tRNA(Gly) + AMP + diphosphate. The polypeptide is Glycine--tRNA ligase beta subunit (Streptococcus pyogenes serotype M3 (strain ATCC BAA-595 / MGAS315)).